The chain runs to 540 residues: Acrosin-binding protein (540 aa).

Residues 1–24 (MKLAASFLLMLLEVLLLPETPLSA) form the signal peptide. The tract at residues 25 to 104 (EEALASTPGS…ASWFESFCQF (80 aa)) is pro-ACR binding. The propeptide at 25–272 (EEALASTPGS…NPSFFTPRVR (248 aa)) is removed in mature form. A disordered region spans residues 181–266 (SLSLGGKEQQ…SKSLSSNPSF (86 aa)). Residues 195–213 (LGLEQQHKQEQIQEHKLEE) show a composition bias toward basic and acidic residues. A compositionally biased stretch (acidic residues) spans 214–241 (AQEQEEQEEEEEEEEAKQEEGQGTEEGL). Polar residues predominate over residues 256 to 266 (QSKSLSSNPSF). Residues 316–424 (LPHTETLMVL…NQAKIPEKGR (109 aa)) form a pro-ACR binding region.

As to quaternary structure, binds pro-ACR. Does not bind the mature form of ACR. In terms of assembly, binds pro-ACR. Does not bind mature form of ACR. The N-terminus is blocked. In terms of processing, phosphorylated on Tyr residues in capacitated sperm. Post-translationally, synthesized as a 60-kDa precursor, the 32-kDa mature form is post-translationally produced by the removal of the N-terminal half of the precursor during sperm maturation in the testis and/or epididymis.

The protein resides in the cytoplasmic vesicle. It localises to the secretory vesicle. It is found in the acrosome. Functionally, acrosomal protein that maintains proacrosin (pro-ACR) as an enzymatically inactive zymogen in the acrosome. Involved also in the acrosome formation. Its function is as follows. Maintains pro-ACR as an enzymatically inactive zymogen in the acrosome until acrosomal exocytosis. Partially also contributes to the assembly of acrosomal proteins to form an acrosomal granule. In terms of biological role, rodent specific isoform that participates in the formation of the acrosomal granule into the center of the acrosomal vesicle during early spermiogenesis. In the fertilization process promotes ACR release from the acrosome during acrosomal exocytosis. The sequence is that of Acrosin-binding protein from Rattus norvegicus (Rat).